Reading from the N-terminus, the 122-residue chain is Large ribosomal subunit protein bL12 (122 aa).

Belongs to the bacterial ribosomal protein bL12 family. As to quaternary structure, homodimer. Part of the ribosomal stalk of the 50S ribosomal subunit. Forms a multimeric L10(L12)X complex, where L10 forms an elongated spine to which 2 to 4 L12 dimers bind in a sequential fashion. Binds GTP-bound translation factors.

Forms part of the ribosomal stalk which helps the ribosome interact with GTP-bound translation factors. Is thus essential for accurate translation. In Shewanella loihica (strain ATCC BAA-1088 / PV-4), this protein is Large ribosomal subunit protein bL12.